The following is a 243-amino-acid chain: Proteasome subunit beta (243 aa).

Composition is skewed to basic and acidic residues over residues 1–11 (MRTPTHDEFSG) and 33–47 (NADR…KETK). Positions 1-49 (MRTPTHDEFSGRLDSLNGDRSNVFGPELGEFSNADRRADELGDKETKTG) are cleaved as a propeptide — removed in mature form; by autocatalysis. The tract at residues 1–50 (MRTPTHDEFSGRLDSLNGDRSNVFGPELGEFSNADRRADELGDKETKTGT) is disordered. Threonine 50 acts as the Nucleophile in catalysis. Residue serine 129 is modified to Phosphoserine.

This sequence belongs to the peptidase T1B family. As to quaternary structure, the 20S proteasome core is composed of 14 alpha and 14 beta subunits that assemble into four stacked heptameric rings, resulting in a barrel-shaped structure. The two inner rings, each composed of seven catalytic beta subunits, are sandwiched by two outer rings, each composed of seven alpha subunits. H.volcanii produces at least 2 types of 20S proteasomes: an alpha1-beta proteasome and a proteasome containing all three subunits (alpha1, alpha2, and beta) that appears to be asymmetrical with homo-oligomeric alpha1 and alpha2 rings positioned on separate ends. The catalytic chamber with the active sites is on the inside of the barrel. Has probably a gated structure, the ends of the cylinder being occluded by the N-termini of the alpha-subunits. Is likely capped at one or both ends by the proteasome regulatory ATPase, PAN.

Its subcellular location is the cytoplasm. The enzyme catalyses Cleavage of peptide bonds with very broad specificity.. The formation of the proteasomal ATPase PAN-20S proteasome complex, via the docking of the C-termini of PAN into the intersubunit pockets in the alpha-rings, triggers opening of the gate for substrate entry. Interconversion between the open-gate and close-gate conformations leads to a dynamic regulation of the 20S proteasome proteolysis activity. In vitro, the chymotrypsin-like activity of the alpha1-beta proteasome is potently inhibited by carbobenzoxyl-leucinyl-leucinyl-leucinal-H (MG132) and significantly by N-acetyl-leucinyl-leucinyl-norleucinal-H (calpain inhibitor I). Its function is as follows. Component of the proteasome core, a large protease complex with broad specificity involved in protein degradation. The H.volcanii alpha1-beta proteasome is able to cleave oligopeptides after Phe, Tyr and Trp, poorly after Glu but not after Arg. Thus, displays chymotrypsin-like activity, low caspase-like activity but no trypsin-like activity. This is Proteasome subunit beta from Haloferax volcanii (strain ATCC 29605 / DSM 3757 / JCM 8879 / NBRC 14742 / NCIMB 2012 / VKM B-1768 / DS2) (Halobacterium volcanii).